The following is a 205-amino-acid chain: Urease accessory protein UreG (205 aa).

10–17 (GPVGSGKT) serves as a coordination point for GTP.

Belongs to the SIMIBI class G3E GTPase family. UreG subfamily. As to quaternary structure, homodimer. UreD, UreF and UreG form a complex that acts as a GTP-hydrolysis-dependent molecular chaperone, activating the urease apoprotein by helping to assemble the nickel containing metallocenter of UreC. The UreE protein probably delivers the nickel.

It localises to the cytoplasm. Facilitates the functional incorporation of the urease nickel metallocenter. This process requires GTP hydrolysis, probably effectuated by UreG. The polypeptide is Urease accessory protein UreG (Corynebacterium urealyticum (strain ATCC 43042 / DSM 7109)).